Reading from the N-terminus, the 449-residue chain is Probable glucuronosyltransferase 47 A (449 aa).

Residues Met-1 to Arg-31 are Cytoplasmic-facing. Residues Thr-32–Gln-52 form a helical; Signal-anchor for type II membrane protein membrane-spanning segment. The Lumenal portion of the chain corresponds to Asp-53–Leu-449. N-linked (GlcNAc...) asparagine glycans are attached at residues Asn-172 and Asn-433.

Belongs to the glycosyltransferase 47 family. Mostly expressed in newly formed or expanding tissues.

It localises to the golgi apparatus membrane. Involved in the synthesis of glucuronoxylan hemicellulose in secondary cell walls. The sequence is that of Probable glucuronosyltransferase 47 A from Physcomitrium patens (Spreading-leaved earth moss).